Consider the following 415-residue polypeptide: Protein fuzzy homolog (415 aa).

This sequence belongs to the fuzzy family. Component of the CPLANE (ciliogenesis and planar polarity effectors) complex, composed of INTU, FUZ and WDPCP. Interacts with CPLANE1 and CPLANE2.

Its subcellular location is the cytoplasm. The protein resides in the cytoskeleton. It is found in the cilium basal body. Its function is as follows. Probable planar cell polarity effector involved in cilium biogenesis. Proposed to function as core component of the CPLANE (ciliogenesis and planar polarity effectors) complex involved in the recruitment of peripheral IFT-A proteins to basal bodies. May regulate protein and membrane transport to the cilium. May regulate the morphogenesis of hair follicles which depends on functional primary cilia. Binds phosphatidylinositol 3-phosphate with highest affinity, followed by phosphatidylinositol 4-phosphate and phosphatidylinositol 5-phosphate. The polypeptide is Protein fuzzy homolog (Fuz) (Rattus norvegicus (Rat)).